A 156-amino-acid chain; its full sequence is Succinate dehydrogenase assembly factor 2-B, mitochondrial (156 aa).

Residues 1–24 constitute a mitochondrion transit peptide; sequence MLRQFIVSTVGRRLQLPMMAQSRL.

It belongs to the SDHAF2 family. As to quaternary structure, interacts with the flavoprotein subunit within the SDH catalytic dimer.

Its subcellular location is the mitochondrion matrix. Functionally, plays an essential role in the assembly of succinate dehydrogenase (SDH), an enzyme complex (also referred to as respiratory complex II) that is a component of both the tricarboxylic acid (TCA) cycle and the mitochondrial electron transport chain, and which couples the oxidation of succinate to fumarate with the reduction of ubiquinone (coenzyme Q) to ubiquinol. Required for flavinylation (covalent attachment of FAD) of the flavoprotein subunit of the SDH catalytic dimer. In Drosophila simulans (Fruit fly), this protein is Succinate dehydrogenase assembly factor 2-B, mitochondrial.